A 427-amino-acid polypeptide reads, in one-letter code: MGTYTLECAGCRHTIPDNYTLRCECGAGLIRARYTARQISPRDLPGMWRYYDWLPTRGHLDTPGAPVTFKSQGLSKELGLKELYISFNGYWPEMGARMDTCSFKELEAPPTIVRAREHGGRAMVLASVGNTARAFAYLSTLTGFPVVIVVPRKSAHNLWIPGREPGDSIKLITMEEGNDYSDAIRLSERIAGIEGVMPEGGARNVARRDGMGVTMLDAAVTMKRMPDDYFQAIGSGTGGIAAWEAALRLRDDGRFGDRLPKLHLAQNLPFAPMYYAWKAGRRDIIPELDMPEAKKQIEAMYTDILSNRNPPYGVTGGVYDALIDTQGDMYAVTNDEAIRAKRIFEKAEGIDILPPAAVAVAALLQACDRGLEKKRTVLLNITGGGLERLRKEVSMSMVKPCLNVEGPEVPLENITKAIQWQTLSKKS.

Residue lysine 104 is modified to N6-(pyridoxal phosphate)lysine. Residues asparagine 130 and threonine 382 each contribute to the pyridoxal 5'-phosphate site.

This sequence belongs to the threonine synthase family. Cysteate synthase subfamily. In terms of assembly, homotrimer. Pyridoxal 5'-phosphate is required as a cofactor.

The catalysed reaction is O-phospho-L-serine + sulfite + H(+) = L-cysteate + phosphate. It participates in cofactor biosynthesis; coenzyme M biosynthesis. In terms of biological role, specifically catalyzes the beta-elimination of phosphate from L-phosphoserine and the beta-addition of sulfite to the dehydroalanine intermediate to produce L-cysteate. The polypeptide is Cysteate synthase (Methanocella paludicola (strain DSM 17711 / JCM 13418 / NBRC 101707 / SANAE)).